Here is a 358-residue protein sequence, read N- to C-terminus: MDGFSGGIDINIFDGNSTENGSGDFEDFIEPCFMHENSDFNRIFLPTIYSFIFLLGIIGNGLVVVVMGYQKKSRTMTDKYRLHLSVADLLFVFTLPFWSVDAAIGWYFKEFLCKAVHVIYTVNLYSSVLILAFISLDRYLAIVHATNSQGSRKMLADKVVYAGVWLPALLLTVPDLVFARVSDENGQFVCDRIYPIENRETWTVGFRFLHITVGLILPGLIILICYCVIISKLSHSKGHQKRKALKTTVILILAFFACWLPYYVCLTTDTFMLLGLVKGDCIWENTLHMAISITEALAFFHCCLNPILYAFLGAKFKTSAQNAFTSVSRGSSLKILSKKRAGLSSVSTESESSSFHSS.

Positions 1–25 are important for chemokine binding and signaling; sequence MDGFSGGIDINIFDGNSTENGSGDF. At 1–44 the chain is on the extracellular side; that stretch reads MDGFSGGIDINIFDGNSTENGSGDFEDFIEPCFMHENSDFNRIF. Asn16 and Asn20 each carry an N-linked (GlcNAc...) asparagine glycan. Cystine bridges form between Cys32–Cys281 and Cys113–Cys190. A helical transmembrane segment spans residues 45–67; sequence LPTIYSFIFLLGIIGNGLVVVVM. Topologically, residues 68 to 81 are cytoplasmic; it reads GYQKKSRTMTDKYR. Residues 82–103 traverse the membrane as a helical segment; sequence LHLSVADLLFVFTLPFWSVDAA. A chemokine binding region spans residues 98 to 101; it reads WSVD. Residues 104 to 114 are Extracellular-facing; sequence IGWYFKEFLCK. Residues 115–134 traverse the membrane as a helical segment; it reads AVHVIYTVNLYSSVLILAFI. Positions 117-121 are chemokine binding; the sequence is HVIYT. Over 135-158 the chain is Cytoplasmic; sequence SLDRYLAIVHATNSQGSRKMLADK. The interval 139-151 is involved in dimerization; when bound to chemokine; that stretch reads YLAIVHATNSQGS. A helical membrane pass occupies residues 159 to 178; the sequence is VVYAGVWLPALLLTVPDLVF. Over 179 to 202 the chain is Extracellular; it reads ARVSDENGQFVCDRIYPIENRETW. The tract at residues 190–194 is chemokine binding, important for signaling; it reads CDRIY. The helical transmembrane segment at 203–223 threads the bilayer; the sequence is TVGFRFLHITVGLILPGLIIL. Residues 224-248 lie on the Cytoplasmic side of the membrane; that stretch reads ICYCVIISKLSHSKGHQKRKALKTT. Residues 249–268 traverse the membrane as a helical segment; it reads VILILAFFACWLPYYVCLTT. Residues 269–289 lie on the Extracellular side of the membrane; that stretch reads DTFMLLGLVKGDCIWENTLHM. The helical transmembrane segment at 290–309 threads the bilayer; the sequence is AISITEALAFFHCCLNPILY. Residues 310–358 are Cytoplasmic-facing; sequence AFLGAKFKTSAQNAFTSVSRGSSLKILSKKRAGLSSVSTESESSSFHSS. The segment at 338-358 is disordered; the sequence is KKRAGLSSVSTESESSSFHSS. Positions 344–358 are enriched in low complexity; the sequence is SSVSTESESSSFHSS.

The protein belongs to the G-protein coupled receptor 1 family. In terms of assembly, monomer. Can form dimers. Sulfation is required for efficient binding of cxcl12/sdf-1alpha and promotes its dimerization. Post-translationally, O- and N-glycosylated. Highly expressed in the embryonic nervous system including forebrain, hindbrain and sensory organs (including eye), and in neural crest cells. Also expressed in the dorsal lateral plate, the first site of definitive hematopoiesis in the embryo. Appears in migrating presumptive primordial germ cells (pPGCs) from stage 24. Expressed in the epidermis at stage 40. In the adult, highly expressed in the spleen with lower levels of expression in the liver and very low levels in kidney, heart, skin and brain.

Its subcellular location is the cell membrane. The protein localises to the cytoplasm. It is found in the nucleus. It localises to the early endosome. The protein resides in the late endosome. Its subcellular location is the lysosome. Functionally, receptor for the C-X-C chemokine cxcl12/sdf-1. Transduces a signal by increasing the intracellular level of calcium ions. Signaling with cxcl12/sdf-1 mediates the directional movement of mesodermal cells during gastrulation. May play a role in the migration of embryonic presumptive primordial germ cells (pPGCs). May also be involved in regulating the migration of hematopoietic stem cells into the larval liver. In Xenopus laevis (African clawed frog), this protein is C-X-C chemokine receptor type 4-A (cxcr4-a).